A 406-amino-acid chain; its full sequence is Succinylornithine transaminase (406 aa).

K252 is subject to N6-(pyridoxal phosphate)lysine.

The protein belongs to the class-III pyridoxal-phosphate-dependent aminotransferase family. AstC subfamily. The cofactor is pyridoxal 5'-phosphate.

It catalyses the reaction N(2)-succinyl-L-ornithine + 2-oxoglutarate = N-succinyl-L-glutamate 5-semialdehyde + L-glutamate. The protein operates within amino-acid degradation; L-arginine degradation via AST pathway; L-glutamate and succinate from L-arginine: step 3/5. In terms of biological role, catalyzes the transamination of N(2)-succinylornithine and alpha-ketoglutarate into N(2)-succinylglutamate semialdehyde and glutamate. Can also act as an acetylornithine aminotransferase. The protein is Succinylornithine transaminase of Escherichia fergusonii (strain ATCC 35469 / DSM 13698 / CCUG 18766 / IAM 14443 / JCM 21226 / LMG 7866 / NBRC 102419 / NCTC 12128 / CDC 0568-73).